A 192-amino-acid polypeptide reads, in one-letter code: Imidazoleglycerol-phosphate dehydratase (192 aa).

It belongs to the imidazoleglycerol-phosphate dehydratase family.

Its subcellular location is the cytoplasm. It catalyses the reaction D-erythro-1-(imidazol-4-yl)glycerol 3-phosphate = 3-(imidazol-4-yl)-2-oxopropyl phosphate + H2O. The protein operates within amino-acid biosynthesis; L-histidine biosynthesis; L-histidine from 5-phospho-alpha-D-ribose 1-diphosphate: step 6/9. This Carboxydothermus hydrogenoformans (strain ATCC BAA-161 / DSM 6008 / Z-2901) protein is Imidazoleglycerol-phosphate dehydratase.